Reading from the N-terminus, the 89-residue chain is MANNPSSKKRARQQVKRRAHNMSLRSMVRTYIKKVSAQIEQGSYDGATQALTTAAPIIDSMVNKGIFSKNKAARTKSRLNAKIKALKAS.

This sequence belongs to the bacterial ribosomal protein bS20 family.

In terms of biological role, binds directly to 16S ribosomal RNA. The polypeptide is Small ribosomal subunit protein bS20 (Hahella chejuensis (strain KCTC 2396)).